Reading from the N-terminus, the 1709-residue chain is MQTSISTTTIEDHLHHYSPEESQKLLSRESSINTDLFKHENESVDLLLKEMNSTPSKLLPIDKHSHLQLQPQSSSASIFNSPTKPLNFPRTNSKPSLDPNSSSDTYTSEQDQEKGKEEKKDTAFQTSFDRNFDLDNSIDIQQTIQHQQQQPQQQQQLPQTDNNLIDEFSFQTPMTSTLDLTKQNPTVDKINENHAPTYINTSPNKSIMKKATPKASPKKVAFTATNPEIHHYPDNRVEEEDQSQQKEDSVEPPSIQHQWKDPSQFNYSDEDTNASVPPTPPLHTTKPTFAQLLNKNNEVNSEPEALTDMKLKHENFSNLSLDEKVNLYLSPTNNNNSKNVSDMDSHLQNLQDASKNKTNENIHNLSFALKAPKNDIENPLNSLTNADISLRSSGSSQSSLQSLRDDNRVLESTPGSPKKVNPGLSLNDGIKGFSDEVVESLLPRDLSRDKLETTKENDAPEHNNENFIDAKSTNTNKGQLLVSSDDHLDSFDRSYNHTEQSILNLLNSASQSQISLNALEKQKQIQEQEQTQAAEPEEETSFSDNIKVKQEPKSNLEFVKVTIKKEPVSATEIKAPKREFSSRILRIKNEDEIAEPADIHPKKENEANSHVEDTDALLKKALNDDEESDTTQNSTKMSIRFHIDSDWKLEDSNDGDREDNDDISRFEKSDILNDVSQTSDIIGDKYGNSSSEITTKTLAPPRSDNNDKENSKSFEDPANNESSQQQLEVPHTKEDDSILANSSNIAPPEELTLPVVEANDYSSFNDVTKTFDAYSSFEESLSREHETDSKPINFISIWHKQEKQKKHQIHKVPTKQIIASYQQYKNEQESRVTSDKVKIPNAIQSKKFKEVNVMSRRVVSPDMDDLNVSQFLPELSEDSGFKDLNFANYSNNTNRPRSFTPLSTKNVLSNIDNDPNVVEPPEPKSYAEIRNARRLSANKAAPNQAPPLPPQRQPSSTRSNSNKRVSRFRVPTFEIRRTSSALAPCDMYNDIFDDFGAGSKPTIKAEGMKTLPSMDKDDVKRILNAKKGVTQDEYINAKLVDQKPKKNSIVTDPEDRYEELQQTASIHNATIDSSIYGRPDSISTDMLPYLSDELKKPPTALLSADRLFMEQEVHPLRSNSVLVHPGAGAATNSSMLPEPDFELINSPTRNVSNNSDNVAISGNASTISFNQLDMNFDDQATIGQKIQEQPASKSANTVRGDDDGLASAPETPRTPTKKESISSKPAKLSSASPRKSPIKIGSPVRVIKKNGSIAGIEPIPKATHKPKKSFQGNEISNHKVRDGGISPSSGSEHQQHNPSMVSVPSQYTDATSTVPDENKDVQHKPREKQKQKHHHRHHHHKQKTDIPGVVDDEIPDVGLQERGKLFFRVLGIKNINLPDINTHKGRFTLTLDNGVHCVTTPEYNMDDHNVAIGKEFELTVADSLEFILTLKASYEKPRGTLVEVTEKKVVKSRNRLSRLFGSKDIITTTKFVPTEVKDTWANKFAPDGSFARCYIDLQQFEDQITGKALQFDLNCFNEWETMSNGNQPMKRGKPYKIAQLEVKMLYVPRSDPREILPTSIRSAYESINELNNEQNNYFEGYLHQEGGDCPIFKKRFFKLMGTSLLAHSEISHKTRAKINLSKVVDLIYVDKENIDRSNHRNFSDVLLLDHAFKIKFANGELIDFCAPNKHEMKIWIQNLQEIIYRNRFRRQPWVNLMLQQQQQQQSSQQ.

9 disordered regions span residues Met1 to Ser27, Leu67 to Gln125, Glu192 to Pro281, Asp387 to Gly429, Arg448 to Ser472, Ile525 to Lys549, Glu595 to Ala746, Ala937 to Phe968, and Ile1186 to Val1349. Residues Ile10–Ser27 are compositionally biased toward basic and acidic residues. Positions Leu67–Ser77 are enriched in low complexity. Polar residues predominate over residues Ile78–Ser108. Over residues Asp111–Thr122 the composition is skewed to basic and acidic residues. Residues Ile255–Tyr267 are compositionally biased toward polar residues. Over residues Ser389–Ser402 the composition is skewed to low complexity. Over residues Arg448–Asn464 the composition is skewed to basic and acidic residues. Basic and acidic residues-rich tracts occupy residues Glu595 to Asn623, Phe641 to Gly655, and Asp662 to Ile671. Polar residues predominate over residues Gly687–Thr697. Positions Asp704 to Glu715 are enriched in basic and acidic residues. A compositionally biased stretch (low complexity) spans Gln953–Asn962. Polar residues predominate over residues Ile1186–Thr1197. Residues Ser1222 to Lys1235 show a composition bias toward low complexity. The segment covering Ser1286 to Pro1315 has biased composition (polar residues). Basic residues predominate over residues Pro1325–Gln1342. One can recognise a PH domain in the interval Asn1575–Tyr1684.

The protein belongs to the BUD4 family.

The protein localises to the cell surface. The protein resides in the bud neck. It is found in the spore. Its subcellular location is the perispore. In terms of biological role, required for establishment of the axial budding pattern in yeast cells. May be involved in the selection of future sites of septation in hyphal cells. Contributes to morphogenesis and is important for induction of hyphal growth. Also plays a role in epithelial adherence, and is involved in intestinal colonization and systemic infection. The role in adhesion is probably minor compared with its role in morphogenesis. This is Bud site selection protein BUD4 (BUD4) from Candida albicans (strain SC5314 / ATCC MYA-2876) (Yeast).